The following is a 425-amino-acid chain: Glycosyl hydrolase family 109 protein 2 (425 aa).

Residues 29-30 (NR), glutamate 51, 99-102 (WLTH), 119-120 (EV), and asparagine 148 each bind NAD(+). Residue tyrosine 177 coordinates substrate. Residues 194–198 (FHNHW) and tyrosine 211 each bind NAD(+). Substrate contacts are provided by residues 211–214 (YPTH) and tyrosine 293.

The protein belongs to the Gfo/Idh/MocA family. Glycosyl hydrolase 109 subfamily. NAD(+) serves as cofactor.

Functionally, glycosidase. The protein is Glycosyl hydrolase family 109 protein 2 of Bacteroides fragilis (strain YCH46).